The following is a 1235-amino-acid chain: ATP-dependent helicase/nuclease subunit A (1235 aa).

The UvrD-like helicase ATP-binding domain occupies 12 to 482; sequence SLWTDDQWKA…IDLSQNFRSR (471 aa). An ATP-binding site is contributed by 33-40; sequence AAAGSGKT. In terms of domain architecture, UvrD-like helicase C-terminal spans 509 to 800; it reads AAELTLGASF…RMMTIHASKG (292 aa).

This sequence belongs to the helicase family. AddA subfamily. As to quaternary structure, heterodimer of AddA and AddB/RexB. It depends on Mg(2+) as a cofactor.

It catalyses the reaction Couples ATP hydrolysis with the unwinding of duplex DNA by translocating in the 3'-5' direction.. The enzyme catalyses ATP + H2O = ADP + phosphate + H(+). Functionally, the heterodimer acts as both an ATP-dependent DNA helicase and an ATP-dependent, dual-direction single-stranded exonuclease. Recognizes the chi site generating a DNA molecule suitable for the initiation of homologous recombination. The AddA nuclease domain is required for chi fragment generation; this subunit has the helicase and 3' -&gt; 5' nuclease activities. The protein is ATP-dependent helicase/nuclease subunit A of Listeria monocytogenes serotype 4b (strain F2365).